The sequence spans 121 residues: Large ribosomal subunit protein bL12 (121 aa).

The protein belongs to the bacterial ribosomal protein bL12 family. Homodimer. Part of the ribosomal stalk of the 50S ribosomal subunit. Forms a multimeric L10(L12)X complex, where L10 forms an elongated spine to which 2 to 4 L12 dimers bind in a sequential fashion. Binds GTP-bound translation factors.

In terms of biological role, forms part of the ribosomal stalk which helps the ribosome interact with GTP-bound translation factors. Is thus essential for accurate translation. The chain is Large ribosomal subunit protein bL12 from Escherichia coli O81 (strain ED1a).